The primary structure comprises 236 residues: 1-(5-phosphoribosyl)-5-[(5-phosphoribosylamino)methylideneamino] imidazole-4-carboxamide isomerase (236 aa).

The Proton acceptor role is filled by Asp8. Catalysis depends on Asp127, which acts as the Proton donor.

It belongs to the HisA/HisF family.

The protein resides in the cytoplasm. It catalyses the reaction 1-(5-phospho-beta-D-ribosyl)-5-[(5-phospho-beta-D-ribosylamino)methylideneamino]imidazole-4-carboxamide = 5-[(5-phospho-1-deoxy-D-ribulos-1-ylimino)methylamino]-1-(5-phospho-beta-D-ribosyl)imidazole-4-carboxamide. The protein operates within amino-acid biosynthesis; L-histidine biosynthesis; L-histidine from 5-phospho-alpha-D-ribose 1-diphosphate: step 4/9. The polypeptide is 1-(5-phosphoribosyl)-5-[(5-phosphoribosylamino)methylideneamino] imidazole-4-carboxamide isomerase (Sulfurimonas denitrificans (strain ATCC 33889 / DSM 1251) (Thiomicrospira denitrificans (strain ATCC 33889 / DSM 1251))).